We begin with the raw amino-acid sequence, 695 residues long: Follicle-stimulating hormone receptor (695 aa).

An N-terminal signal peptide occupies residues 1-17 (MALFLVALLAFLSLGSG). 2 disulfide bridges follow: C18–C25 and C23–C32. The region spanning 18–46 (CHHRLCHCSNGVFLCQDSKVTEMPSDLPR) is the LRRNT domain. Residues 18–366 (CHHRLCHCSN…EDIMGYDILR (349 aa)) lie on the Extracellular side of the membrane. 9 LRR repeats span residues 48 to 70 (AVEL…SGFG), 71 to 93 (DLEK…VFSN), 96 to 118 (KLHE…AFQN), 121 to 142 (NLRY…HKIQ), 143 to 167 (SLQK…SFMG), 171 to 192 (ESMI…AFNG), 194 to 216 (QLDE…VFQG), 219 to 239 (GPVI…YGLE), and 240 to 262 (NLKK…EKFV). 2 N-linked (GlcNAc...) asparagine glycosylation sites follow: N191 and N199. Disulfide bonds link C275/C346, C276/C292, C276/C356, and C292/C338. N293 carries an N-linked (GlcNAc...) asparagine glycan. Residue Y335 is modified to Sulfotyrosine. A helical membrane pass occupies residues 367 to 387 (VLIWFISILAITGNILVLVIL). Residues 388-398 (ITSQYKLTVPR) lie on the Cytoplasmic side of the membrane. A helical transmembrane segment spans residues 399-421 (FLMCNLAFADLCIGIYLLLIASV). At 422 to 443 (DVHTKSQYHNYAIDWQTGAGCD) the chain is on the extracellular side. C442 and C517 are disulfide-bonded. The helical transmembrane segment at 444–465 (AAGFFTVFASELSVYTLTAITL) threads the bilayer. The Cytoplasmic portion of the chain corresponds to 466-485 (ERWHTITHAMQLECKVHVRH). A helical membrane pass occupies residues 486-508 (AASIMLVGWVFAFAVALFPIFGI). Residues 509 to 528 (SSYMKVSICLPMDIDSPLSQ) lie on the Extracellular side of the membrane. Residues 529–550 (LYVMSLLVLNVLAFVVICGCYT) traverse the membrane as a helical segment. At 551-573 (HIYLTVRNPNITSSSSDTKIAKR) the chain is on the cytoplasmic side. The helical transmembrane segment at 574 to 597 (MAMLIFTDFLCMAPISFFAISASL) threads the bilayer. Over 598–608 (KVPLITVSKSK) the chain is Extracellular. Residues 609-630 (ILLVLFYPINSCANPFLYAIFT) form a helical membrane-spanning segment. At 631–695 (RNFRRDFFIL…LIPLRHLAKN (65 aa)) the chain is on the cytoplasmic side.

It belongs to the G-protein coupled receptor 1 family. FSH/LSH/TSH subfamily. In terms of assembly, homotrimer. Functions as a homotrimer binding the FSH hormone heterodimer composed of CGA and FSHB. Interacts with ARRB2. Interacts with APPL2; interaction is independent of follicle stimulating hormone stimulation. In terms of processing, N-glycosylated; indirectly required for FSH-binding, possibly via a conformational change that allows high affinity binding of hormone. Sulfated. Isoform FSH-R3 is expressed in ovary and testis, but not in kidney (at protein level).

The protein localises to the cell membrane. Its function is as follows. G protein-coupled receptor for follitropin, the follicle-stimulating hormone. The activity of isoform FSH-R1 is mediated by G proteins which activate adenylate cyclase. Isoform FSH-R2 and isoform FSH-R3 also bind FSH, but this does not result in activation of adenylate cyclase. Isoform FSH-R3 may be involved in calcium signaling. Through cAMP production activates the downstream PI3K-AKT and ERK1/ERK2 signaling pathways. This chain is Follicle-stimulating hormone receptor (FSHR), found in Ovis aries (Sheep).